A 253-amino-acid chain; its full sequence is 28 kDa inner dynein arm light chain, axonemal (253 aa).

The disordered stretch occupies residues 19–44 (TSKDKGKGAKGTPGKKGALPPVEQKP). Positions 160 to 239 (IRKALQTEQG…LKQQLETFLV (80 aa)) form a coiled coil.

Belongs to the inner dynein arm light chain family.

Its subcellular location is the cytoplasm. It localises to the cytoskeleton. The protein resides in the flagellum axoneme. Functionally, plays a dynamic role in flagellar motility. May be necessary for stable assembly of a subset of inner dynein arms or for the binding of these arms to the outer doublet microtubules of the axoneme. The protein is 28 kDa inner dynein arm light chain, axonemal (IDA4) of Chlamydomonas reinhardtii (Chlamydomonas smithii).